We begin with the raw amino-acid sequence, 677 residues long: Zinc finger protein 526 (677 aa).

3 consecutive C2H2-type zinc fingers follow at residues 57 to 79 (FMCS…QEQH), 109 to 131 (FQCG…QDAH), and 141 to 164 (YQCG…KAQH). Positions 167 to 190 (TAAAKPPVPPPLPPVTPPPPPPAP) are disordered. The segment covering 172–190 (PPVPPPLPPVTPPPPPPAP) has biased composition (pro residues). The C2H2-type 4 zinc finger occupies 198–220 (YECPECSTLCTTPEEFLEHQGTH). Residues 223 to 232 (SLEKEEHNGL) show a composition bias toward basic and acidic residues. The interval 223 to 300 (SLEKEEHNGL…RRASHGPASA (78 aa)) is disordered. The segment covering 233–257 (EEEEEDDEDDNEETEEEEEAAAEVG) has biased composition (acidic residues). 4 consecutive C2H2-type zinc fingers follow at residues 304–326 (FYCS…GRAH), 331–353 (HECT…LRLH), 359–381 (YLCV…RRAH), and 387–408 (HRCR…RRTH). The interval 408-449 (HAGKSGAPPSAAPPTVASAVASLAPAEPTPPPPAPPTPPAQL) is disordered. A compositionally biased stretch (low complexity) spans 410-433 (GKSGAPPSAAPPTVASAVASLAPA). Positions 434-449 (EPTPPPPAPPTPPAQL) are enriched in pro residues. 5 consecutive C2H2-type zinc fingers follow at residues 449-472 (LPCP…RAVH), 479-501 (HRCG…LRTH), 507-529 (FQCH…QLTH), 535-557 (YQCL…RRLH), and 580-602 (YYCG…QRVH). Residues 608 to 627 (LTLQPPRSPPPAPPPPPEPQ) form a disordered region. Residues 613–626 (PRSPPPAPPPPPEP) are compositionally biased toward pro residues.

This sequence belongs to the krueppel C2H2-type zinc-finger protein family.

The protein localises to the nucleus. In terms of biological role, may be involved in transcriptional regulation. This chain is Zinc finger protein 526 (ZNF526), found in Bos taurus (Bovine).